The sequence spans 191 residues: Programmed cell death protein 6 (191 aa).

Ala-2 bears the N-acetylalanine mark. EF-hand domains follow at residues 23–58 (PDQS…GTWT), 59–89 (PFNP…TGVW), 90–125 (KYIT…FGYR), 126–161 (LSDQ…LQRL), and 162–191 (TDIF…FSIV). Asp-36, Asp-38, Ser-40, Val-42, and Glu-47 together coordinate Ca(2+). Ca(2+)-binding residues include Asp-103, Asp-105, Ser-107, Met-109, and Glu-114. Mg(2+)-binding residues include Asp-169, Asp-171, Asp-173, and Trp-175.

In terms of assembly, homodimer and heterodimer; heterodimerizes (via the EF-hand 5) with PEF1. Isoform 1 and isoform 2 self-associate; probably forming homodimers. Interacts with CPNE4 (via VWFA domain). Interacts with PDCD6IP; the interaction is calcium-dependent. Interacts with RBM22. Interacts with PLSCR4. Interacts with ANXA7 and TSG101. Interacts with DAPK1. Interacts with SEC31A; the interaction is calcium-dependent and promotes monoubiquitination of SEC31A. Interacts with ANXA11 (via N-terminus); the interaction is calcium-dependent. Interacts with PLSCR3 (via N-terminus); the interaction is calcium-dependent. Interacts with MCOLN1; the interaction is calcium-dependent. Interacts with KDR; the interaction is calcium-dependent. Interacts with HEBP2; the interaction is calcium-dependent. Interacts with TFG. Isoform 1: Interacts with SHISA5, leading to stabilize it. Isoform 2: Does not interact with SHISA5. Isoform 2: Does not interact with PDCD6IP, TSG101, ANXA7 and ANXA11.

The protein resides in the endoplasmic reticulum membrane. It localises to the cytoplasmic vesicle. Its subcellular location is the COPII-coated vesicle membrane. The protein localises to the cytoplasm. It is found in the nucleus. The protein resides in the endosome. In terms of biological role, calcium sensor that plays a key role in processes such as endoplasmic reticulum (ER)-Golgi vesicular transport, endosomal biogenesis or membrane repair. Acts as an adapter that bridges unrelated proteins or stabilizes weak protein-protein complexes in response to calcium: calcium-binding triggers exposure of apolar surface, promoting interaction with different sets of proteins thanks to 3 different hydrophobic pockets, leading to translocation to membranes. Involved in ER-Golgi transport by promoting the association between PDCD6IP and TSG101, thereby bridging together the ESCRT-III and ESCRT-I complexes. Together with PEF1, acts as a calcium-dependent adapter for the BCR(KLHL12) complex, a complex involved in ER-Golgi transport by regulating the size of COPII coats. In response to cytosolic calcium increase, the heterodimer formed with PEF1 interacts with, and bridges together the BCR(KLHL12) complex and SEC31 (SEC31A or SEC31B), promoting monoubiquitination of SEC31 and subsequent collagen export, which is required for neural crest specification. Involved in the regulation of the distribution and function of MCOLN1 in the endosomal pathway. Promotes localization and polymerization of TFG at endoplasmic reticulum exit site. Required for T-cell receptor-, Fas-, and glucocorticoid-induced apoptosis. May mediate Ca(2+)-regulated signals along the death pathway: interaction with DAPK1 can accelerate apoptotic cell death by increasing caspase-3 activity. Its role in apoptosis may however be indirect, as suggested by knockout experiments. May inhibit KDR/VEGFR2-dependent angiogenesis; the function involves inhibition of VEGF-induced phosphorylation of the Akt signaling pathway. In case of infection by HIV-1 virus, indirectly inhibits HIV-1 production by affecting viral Gag expression and distribution. Its function is as follows. Has a lower Ca(2+) affinity than isoform 1. This is Programmed cell death protein 6 (PDCD6) from Homo sapiens (Human).